The sequence spans 507 residues: Probable cytochrome P450 6a18 (507 aa).

A heme-binding site is contributed by Cys-451.

Belongs to the cytochrome P450 family. Heme is required as a cofactor.

It is found in the endoplasmic reticulum membrane. Its subcellular location is the microsome membrane. May be involved in the metabolism of insect hormones and in the breakdown of synthetic insecticides. This Drosophila melanogaster (Fruit fly) protein is Probable cytochrome P450 6a18 (Cyp6a18).